A 154-amino-acid polypeptide reads, in one-letter code: Large-conductance mechanosensitive channel (154 aa).

The next 3 helical transmembrane spans lie at 16–36 (VLGLGIAVIMGDAFNKIISSV), 39–59 (DLLMPIIGAVFGGVDFSGFFI), and 89–109 (GQFLTVVVNFVIVAFILFMIM).

This sequence belongs to the MscL family. In terms of assembly, homopentamer.

The protein localises to the cell inner membrane. Channel that opens in response to stretch forces in the membrane lipid bilayer. May participate in the regulation of osmotic pressure changes within the cell. The sequence is that of Large-conductance mechanosensitive channel from Zymomonas mobilis subsp. mobilis (strain ATCC 31821 / ZM4 / CP4).